A 202-amino-acid chain; its full sequence is Imidazoleglycerol-phosphate dehydratase (202 aa).

This sequence belongs to the imidazoleglycerol-phosphate dehydratase family.

The protein localises to the cytoplasm. The catalysed reaction is D-erythro-1-(imidazol-4-yl)glycerol 3-phosphate = 3-(imidazol-4-yl)-2-oxopropyl phosphate + H2O. The protein operates within amino-acid biosynthesis; L-histidine biosynthesis; L-histidine from 5-phospho-alpha-D-ribose 1-diphosphate: step 6/9. This is Imidazoleglycerol-phosphate dehydratase from Rhodopirellula baltica (strain DSM 10527 / NCIMB 13988 / SH1).